A 122-amino-acid polypeptide reads, in one-letter code: Large ribosomal subunit protein uL14 (122 aa).

It belongs to the universal ribosomal protein uL14 family. As to quaternary structure, part of the 50S ribosomal subunit. Forms a cluster with proteins L3 and L19. In the 70S ribosome, L14 and L19 interact and together make contacts with the 16S rRNA in bridges B5 and B8.

In terms of biological role, binds to 23S rRNA. Forms part of two intersubunit bridges in the 70S ribosome. In Buchnera aphidicola subsp. Schizaphis graminum (strain Sg), this protein is Large ribosomal subunit protein uL14.